Here is a 127-residue protein sequence, read N- to C-terminus: Fumarate reductase subunit C (127 aa).

A run of 3 helical transmembrane segments spans residues 30–50 (ATVL…GSLV), 67–87 (VVIA…HTFF), and 107–127 (IIVL…LIVV).

It belongs to the FrdC family. As to quaternary structure, part of an enzyme complex containing four subunits: a flavoprotein (FrdA), an iron-sulfur protein (FrdB), and two hydrophobic anchor proteins (FrdC and FrdD).

It localises to the cell inner membrane. Anchors the catalytic components of the fumarate reductase complex to the cell membrane, binds quinones. In Vibrio vulnificus (strain CMCP6), this protein is Fumarate reductase subunit C.